Here is a 126-residue protein sequence, read N- to C-terminus: Fluoride-specific ion channel FluC (126 aa).

4 helical membrane-spanning segments follow: residues 1–21 (MTAT…RFHA), 33–53 (AVFP…MGVL), 72–92 (VGVL…ALLV), and 97–117 (IGLA…GLFL). Positions 76 and 79 each coordinate Na(+).

Belongs to the fluoride channel Fluc/FEX (TC 1.A.43) family.

It is found in the cell inner membrane. The catalysed reaction is fluoride(in) = fluoride(out). With respect to regulation, na(+) is not transported, but it plays an essential structural role and its presence is essential for fluoride channel function. Its function is as follows. Fluoride-specific ion channel. Important for reducing fluoride concentration in the cell, thus reducing its toxicity. The sequence is that of Fluoride-specific ion channel FluC from Novosphingobium aromaticivorans (strain ATCC 700278 / DSM 12444 / CCUG 56034 / CIP 105152 / NBRC 16084 / F199).